Here is a 294-residue protein sequence, read N- to C-terminus: 4-hydroxy-tetrahydrodipicolinate synthase (294 aa).

Thr47 is a binding site for pyruvate. Tyr135 (proton donor/acceptor) is an active-site residue. Lys163 functions as the Schiff-base intermediate with substrate in the catalytic mechanism. Thr205 lines the pyruvate pocket.

This sequence belongs to the DapA family. Homotetramer; dimer of dimers.

The protein resides in the cytoplasm. It catalyses the reaction L-aspartate 4-semialdehyde + pyruvate = (2S,4S)-4-hydroxy-2,3,4,5-tetrahydrodipicolinate + H2O + H(+). It participates in amino-acid biosynthesis; L-lysine biosynthesis via DAP pathway; (S)-tetrahydrodipicolinate from L-aspartate: step 3/4. In terms of biological role, catalyzes the condensation of (S)-aspartate-beta-semialdehyde [(S)-ASA] and pyruvate to 4-hydroxy-tetrahydrodipicolinate (HTPA). This is 4-hydroxy-tetrahydrodipicolinate synthase from Rickettsia rickettsii.